The chain runs to 325 residues: Phospholipid phosphatase-related protein type 1 (325 aa).

Residue asparagine 5 is glycosylated (N-linked (GlcNAc...) asparagine). 3 helical membrane passes run 13–33 (IIPCFIFVELVIMAGTVLLAY), 67–87 (FISPLVLYCVLAATPTAIIFI), and 127–147 (FIGVFAFGLFATDIFVNAGQV). N-linked (GlcNAc...) asparagine glycosylation occurs at asparagine 163. 3 consecutive transmembrane segments (helical) span residues 201 to 219 (AALSIYSALYATMYITSTI), 226 to 244 (LAKPVLCLGDLCTAFLTGL), and 257 to 277 (VIAGFILGTAVALFLGMCVVH). A Phosphoserine modification is found at serine 307. A glycan (N-linked (GlcNAc...) asparagine) is linked at asparagine 316.

The protein belongs to the PA-phosphatase related phosphoesterase family. In terms of tissue distribution, highly expressed in the brain. Also found in the liver, kidney and testis. In the brain shows a strongest expression in the hippocampus and cerebellum.

The protein resides in the cell membrane. It localises to the cell projection. It is found in the neuron projection. May play a role in neurite outgrowth and neurogenesis. This chain is Phospholipid phosphatase-related protein type 1, found in Rattus norvegicus (Rat).